A 98-amino-acid polypeptide reads, in one-letter code: NADH-ubiquinone oxidoreductase chain 4L (98 aa).

The next 3 helical transmembrane spans lie at Met1 to Met21, His25 to Thr45, and Ala67 to Val87.

Belongs to the complex I subunit 4L family. In terms of assembly, core subunit of respiratory chain NADH dehydrogenase (Complex I) which is composed of 45 different subunits.

Its subcellular location is the mitochondrion inner membrane. It carries out the reaction a ubiquinone + NADH + 5 H(+)(in) = a ubiquinol + NAD(+) + 4 H(+)(out). Core subunit of the mitochondrial membrane respiratory chain NADH dehydrogenase (Complex I) which catalyzes electron transfer from NADH through the respiratory chain, using ubiquinone as an electron acceptor. Part of the enzyme membrane arm which is embedded in the lipid bilayer and involved in proton translocation. The sequence is that of NADH-ubiquinone oxidoreductase chain 4L (MT-ND4L) from Talpa europaea (European mole).